A 265-amino-acid chain; its full sequence is NAD kinase 2 (265 aa).

The Proton acceptor role is filled by aspartate 51. NAD(+) contacts are provided by residues 51-52, 122-123, arginine 149, aspartate 151, 162-167, and alanine 186; these read DG, NE, and TAYNKS.

It belongs to the NAD kinase family. The cofactor is a divalent metal cation.

Its subcellular location is the cytoplasm. It carries out the reaction NAD(+) + ATP = ADP + NADP(+) + H(+). Involved in the regulation of the intracellular balance of NAD and NADP, and is a key enzyme in the biosynthesis of NADP. Catalyzes specifically the phosphorylation on 2'-hydroxyl of the adenosine moiety of NAD to yield NADP. The chain is NAD kinase 2 from Bacillus licheniformis (strain ATCC 14580 / DSM 13 / JCM 2505 / CCUG 7422 / NBRC 12200 / NCIMB 9375 / NCTC 10341 / NRRL NRS-1264 / Gibson 46).